We begin with the raw amino-acid sequence, 590 residues long: Ovarian abundant message protein (590 aa).

Residues 1–71 (MQGTDNAPPG…SPGQPLVEEQ (71 aa)) form a disordered region. Over residues 18 to 29 (SPRRIRHVRRHY) the composition is skewed to basic residues. A run of 27 repeats spans residues 66–71 (PLVEEQ), 72–77 (PLVEER), 78–83 (PPVEEQ), 84–89 (PLVEEQ), 90–95 (PLVEEQ), 96–101 (PLVEEQ), 102–107 (PLVEEQ), 108–113 (PLVEGQ), 114–119 (PLVEEQ), 120–125 (PLVEGQ), 126–131 (PPVEGQ), 132–137 (PLVEEQ), 138–143 (PLVEGQ), 144–149 (PLVEGQ), 150–155 (PLVEGQ), 156–161 (PLVEGQ), 162–167 (PLVGGQ), 168–173 (PLVGGQ), 174–179 (PLVEGQ), 180–185 (PLVEGQ), 300–305 (PLAGAP), 306–311 (PLAGVP), 312–317 (PLAVAL), 318–323 (PLAGAP), 324–329 (PLAGVP), 330–335 (PLAGAP), and 336–341 (PLAGAL). Positions 66–185 (PLVEEQPLVE…VEGQPLVEGQ (120 aa)) are 20 X 6 AA tandem repeats of P-[LP]-V-[EG]-[EG]-[QR]. Residues 300–347 (PLAGAPPLAGVPPLAVALPLAGAPPLAGVPPLAGAPPLAGALPRAGVL) form an 8 X 6 AA approximate tandem repeats of P-L-A-[GV]-[AV]-[PL] region. Residues 342-347 (PRAGVL) form a 2-8; approximate repeat. 16 tandem repeats follow at residues 348–353 (RRAGVL), 354–359 (RRAGVL), 360–365 (RRAGVL), 366–371 (RRAGVL), 372–377 (RRAGVL), 378–383 (RRAGVL), 384–389 (RRAGVL), 390–395 (RRAGVL), 396–401 (RRAGVL), 402–407 (RRADVL), 408–413 (RRADVV), 419–424 (QQLADV), 425–430 (QRLADV), 431–436 (QRLADV), 437–442 (QRLADV), and 443–448 (QRLADV). An 11 X 6 AA tandem repeats of approximate R-R-A-[GD]-V-[LV] region spans residues 348–413 (RRAGVLRRAG…ADVLRRADVV (66 aa)). A 6 X 6 AA approximate tandem repeats of Q-[QR]-L-A-D-V region spans residues 419-454 (QQLADVQRLADVQRLADVQRLADVQRLADVQRLVCV). Residues 449–454 (QRLVCV) form a 4-6; approximate repeat.

As to expression, somatic ovarian tissue.

In Ascaris suum (Pig roundworm), this protein is Ovarian abundant message protein (OAM).